Here is a 720-residue protein sequence, read N- to C-terminus: NADH-ubiquinone oxidoreductase 78 kDa subunit, mitochondrial (720 aa).

The transit peptide at 1 to 23 directs the protein to the mitochondrion; it reads MNSIKSHILRSSKRYISASSKRL. Positions 24 to 102 constitute a 2Fe-2S ferredoxin-type domain; sequence AEVEVTVDGR…GMVVHTDSER (79 aa). [2Fe-2S] cluster-binding residues include Cys-58, Cys-69, Cys-72, and Cys-86. A 4Fe-4S His(Cys)3-ligated-type domain is found at 102–141; the sequence is RIKKAREGVTEMLLENHPLDCPVCDQGGECDLQEQSQRYG. The 4Fe-4S Mo/W bis-MGD-type domain maps to 241-297; that stretch reads LKRTETIDVLDAVGSNIRVDTRGIEVMRVLPRLNDDVNEEWISDKTRFACDGLKTQR.

The protein belongs to the complex I 75 kDa subunit family. Core subunit of respiratory chain NADH dehydrogenase (Complex I) which is composed of 45 different subunits. This is the largest subunit of complex I and it is a component of the iron-sulfur (IP) fragment of the enzyme. It depends on [2Fe-2S] cluster as a cofactor. [4Fe-4S] cluster serves as cofactor.

It is found in the mitochondrion. The enzyme catalyses a ubiquinone + NADH + 5 H(+)(in) = a ubiquinol + NAD(+) + 4 H(+)(out). Functionally, core subunit of the mitochondrial membrane respiratory chain NADH dehydrogenase (Complex I) which catalyzes electron transfer from NADH through the respiratory chain, using ubiquinone as an electron acceptor. Essential for catalysing the entry and efficient transfer of electrons within complex I. Plays a key role in the assembly and stability of complex I and participates in the association of complex I with ubiquinol-cytochrome reductase complex (Complex III) to form supercomplexes. Plays a role in cell wall integrity and is involved in osmotic and oxidative resistance, yeast to hypha transition, and the ability to damage and invade oral epithelial cells. This Candida albicans (strain SC5314 / ATCC MYA-2876) (Yeast) protein is NADH-ubiquinone oxidoreductase 78 kDa subunit, mitochondrial.